A 225-amino-acid polypeptide reads, in one-letter code: NAD(P)H-quinone oxidoreductase subunit K, chloroplastic (225 aa).

[4Fe-4S] cluster contacts are provided by C43, C44, C108, and C139.

This sequence belongs to the complex I 20 kDa subunit family. NDH is composed of at least 16 different subunits, 5 of which are encoded in the nucleus. The cofactor is [4Fe-4S] cluster.

Its subcellular location is the plastid. The protein resides in the chloroplast thylakoid membrane. The enzyme catalyses a plastoquinone + NADH + (n+1) H(+)(in) = a plastoquinol + NAD(+) + n H(+)(out). The catalysed reaction is a plastoquinone + NADPH + (n+1) H(+)(in) = a plastoquinol + NADP(+) + n H(+)(out). Its function is as follows. NDH shuttles electrons from NAD(P)H:plastoquinone, via FMN and iron-sulfur (Fe-S) centers, to quinones in the photosynthetic chain and possibly in a chloroplast respiratory chain. The immediate electron acceptor for the enzyme in this species is believed to be plastoquinone. Couples the redox reaction to proton translocation, and thus conserves the redox energy in a proton gradient. The polypeptide is NAD(P)H-quinone oxidoreductase subunit K, chloroplastic (Liriodendron tulipifera (Tuliptree)).